Consider the following 688-residue polypeptide: MTKELFLEIGTEEIPAGFLPKAMAEMEGLIRKELDNARIAFGEVKAMATPRRLALVVSQVAGQQADAEITAMGPAKKVAFNEDGTPTRAGEGFARGQGVEPSALSIVVTEKGEYVAVTKKETGVPTVGLLGEILPRLINNISFKKSMRWGDLDVRFARPVHWIVALFDGIVVPFSFGNIESGTMSRGHRFMANTSFPVRDFTHYLDECERHFVIPDPAKRKEIIRREIHRVAKAAGGRLLPDEGLLEQVTYLVEYPSAVHGTFSAEFLVVPREVLITSMREHQRYFSLVDDNGKLLPGFITINNTLTEDPSVVVKGNERVLRARLSDARFFFDEDKKVPLENRVESLKSVLYQAKLGTSYEKMERFRALAEGVAEELQPGLKEKVSQAATLCKADLVTGMVGEFPEVQGIMGREYAFLQGIDPGVANAIAEHYLPTQAGGELPASDIGAFVSIADKLDTICGCFSVGLIPTGSADPYALRRAALGIINIIVAKGYALQLTTLVSKALARLEGKLTRKKEEVFGDVMDFFQGRFVNLMTDRFPADVVDAVVAVSFDDLVDTAAKIEALAVFKKRPDFEPLAVAFKRVCNIVKGPVVVVGVNELDFEEDAEGTLHRAYHSVAGTVAAKVAERDYLAALTQIATLKGAVDDFFDNVMVMAEDERVRNNRLALLQEIKGLFRDIADFAKITA.

It belongs to the class-II aminoacyl-tRNA synthetase family. As to quaternary structure, tetramer of two alpha and two beta subunits.

Its subcellular location is the cytoplasm. The enzyme catalyses tRNA(Gly) + glycine + ATP = glycyl-tRNA(Gly) + AMP + diphosphate. The polypeptide is Glycine--tRNA ligase beta subunit (Geotalea uraniireducens (strain Rf4) (Geobacter uraniireducens)).